The chain runs to 352 residues: S-adenosylmethionine:tRNA ribosyltransferase-isomerase (352 aa).

This sequence belongs to the QueA family. In terms of assembly, monomer.

Its subcellular location is the cytoplasm. It carries out the reaction 7-aminomethyl-7-carbaguanosine(34) in tRNA + S-adenosyl-L-methionine = epoxyqueuosine(34) in tRNA + adenine + L-methionine + 2 H(+). It functions in the pathway tRNA modification; tRNA-queuosine biosynthesis. Transfers and isomerizes the ribose moiety from AdoMet to the 7-aminomethyl group of 7-deazaguanine (preQ1-tRNA) to give epoxyqueuosine (oQ-tRNA). The sequence is that of S-adenosylmethionine:tRNA ribosyltransferase-isomerase from Vibrio cholerae serotype O1 (strain ATCC 39541 / Classical Ogawa 395 / O395).